A 232-amino-acid chain; its full sequence is Orotidine 5'-phosphate decarboxylase (232 aa).

Residues Asp-13, Lys-35, 62-71 (DLKFHDIPNT), Thr-121, Arg-182, Gln-191, Gly-211, and Arg-212 each bind substrate. Lys-64 acts as the Proton donor in catalysis.

This sequence belongs to the OMP decarboxylase family. Type 1 subfamily. In terms of assembly, homodimer.

The catalysed reaction is orotidine 5'-phosphate + H(+) = UMP + CO2. It participates in pyrimidine metabolism; UMP biosynthesis via de novo pathway; UMP from orotate: step 2/2. Catalyzes the decarboxylation of orotidine 5'-monophosphate (OMP) to uridine 5'-monophosphate (UMP). The protein is Orotidine 5'-phosphate decarboxylase of Teredinibacter turnerae (strain ATCC 39867 / T7901).